Here is a 191-residue protein sequence, read N- to C-terminus: Fe/S biogenesis protein NfuA (191 aa).

[4Fe-4S] cluster is bound by residues Cys-149 and Cys-152.

This sequence belongs to the NfuA family. As to quaternary structure, homodimer. [4Fe-4S] cluster serves as cofactor.

Its function is as follows. Involved in iron-sulfur cluster biogenesis. Binds a 4Fe-4S cluster, can transfer this cluster to apoproteins, and thereby intervenes in the maturation of Fe/S proteins. Could also act as a scaffold/chaperone for damaged Fe/S proteins. The sequence is that of Fe/S biogenesis protein NfuA from Yersinia pseudotuberculosis serotype O:1b (strain IP 31758).